Reading from the N-terminus, the 1147-residue chain is Myosin heavy chain IB (1147 aa).

In terms of domain architecture, Myosin motor spans 9–677 (RGVDDLVLMP…TLFHLEECLD (669 aa)). 103–110 (GESGAGKT) contacts ATP. The residue at position 315 (Ser315) is a Phosphoserine. Residues 551–573 (CDALMEALSRCSPHYIRCIKPND) are actin-binding. A TH1 domain is found at 715–900 (KERQRHSVNR…RANIQIGIAT (186 aa)). Disordered regions lie at residues 901 to 954 (GLPK…YSQP) and 969 to 1089 (AAVP…APAA). Composition is skewed to gly residues over residues 916–951 (SGGG…GGGY) and 975–1079 (GRGG…GAGR). Residues 1090–1147 (PAKPQVKALYDYDAQTGDELTFKEGDTIIVHQKDPAGWWEGELNGKRGWVPANYVQDI) enclose the SH3 domain.

Belongs to the TRAFAC class myosin-kinesin ATPase superfamily. Myosin family. As to quaternary structure, myosin I heavy chain is single-headed. Dimer of a heavy and a light chain. Inability to self-assemble into filaments.

Functionally, myosin is a protein that binds to F-actin and has ATPase activity that is activated by F-actin. The protein is Myosin heavy chain IB (MIB) of Acanthamoeba castellanii (Amoeba).